Here is a 335-residue protein sequence, read N- to C-terminus: tRNA N6-adenosine threonylcarbamoyltransferase (335 aa).

Positions 111 and 115 each coordinate Fe cation. Residues 134-138, D167, G180, and N270 each bind substrate; that span reads LISGG. Residue D298 coordinates Fe cation.

It belongs to the KAE1 / TsaD family. Fe(2+) serves as cofactor.

It localises to the cytoplasm. It carries out the reaction L-threonylcarbamoyladenylate + adenosine(37) in tRNA = N(6)-L-threonylcarbamoyladenosine(37) in tRNA + AMP + H(+). Functionally, required for the formation of a threonylcarbamoyl group on adenosine at position 37 (t(6)A37) in tRNAs that read codons beginning with adenine. Is involved in the transfer of the threonylcarbamoyl moiety of threonylcarbamoyl-AMP (TC-AMP) to the N6 group of A37, together with TsaE and TsaB. TsaD likely plays a direct catalytic role in this reaction. The protein is tRNA N6-adenosine threonylcarbamoyltransferase of Nitrosococcus oceani (strain ATCC 19707 / BCRC 17464 / JCM 30415 / NCIMB 11848 / C-107).